The primary structure comprises 287 residues: Aspartate dehydrogenase domain-containing protein (287 aa).

A phosphoserine mark is found at Ser-24 and Ser-172.

The protein belongs to the L-aspartate dehydrogenase family.

This Mus musculus (Mouse) protein is Aspartate dehydrogenase domain-containing protein.